The chain runs to 416 residues: F-box/FBD/LRR-repeat protein At1g13570 (416 aa).

One can recognise an F-box domain in the interval 5 to 53; the sequence is PDFISDLPQSIIENILTRLSIRDAIRTSVLSSKWRYKWSTLTDLVFDEK. 5 LRR repeats span residues 115 to 142, 164 to 189, 203 to 229, 238 to 263, and 294 to 321; these read VLKL…ELCH, QILV…SLSY, MYLY…SVSM, FEQS…VGYI, and CFED…KVSA. The 39-residue stretch at 346–384 folds into the FBD domain; sequence LPSLESVKITDASGIRYELEFIRFLLGTSPVLETVTVSS.

In Arabidopsis thaliana (Mouse-ear cress), this protein is F-box/FBD/LRR-repeat protein At1g13570.